A 349-amino-acid polypeptide reads, in one-letter code: Ferredoxin--NADP reductase (349 aa).

Residues D35, Q43, Y48, V88, F123, D288, and T329 each contribute to the FAD site.

It belongs to the ferredoxin--NADP reductase type 2 family. In terms of assembly, homodimer. FAD serves as cofactor.

It carries out the reaction 2 reduced [2Fe-2S]-[ferredoxin] + NADP(+) + H(+) = 2 oxidized [2Fe-2S]-[ferredoxin] + NADPH. This chain is Ferredoxin--NADP reductase, found in Colwellia psychrerythraea (strain 34H / ATCC BAA-681) (Vibrio psychroerythus).